The following is a 284-amino-acid chain: NAD kinase (284 aa).

The active-site Proton acceptor is Asp60. NAD(+) contacts are provided by residues 60 to 61, 134 to 135, Arg145, Lys162, Asp164, 175 to 180, and Gln234; these read DG, NE, and TAYSFS.

The protein belongs to the NAD kinase family. A divalent metal cation serves as cofactor.

It is found in the cytoplasm. It catalyses the reaction NAD(+) + ATP = ADP + NADP(+) + H(+). In terms of biological role, involved in the regulation of the intracellular balance of NAD and NADP, and is a key enzyme in the biosynthesis of NADP. Catalyzes specifically the phosphorylation on 2'-hydroxyl of the adenosine moiety of NAD to yield NADP. The sequence is that of NAD kinase from Clostridium botulinum (strain Alaska E43 / Type E3).